A 231-amino-acid chain; its full sequence is Female protein (231 aa).

The N-terminal stretch at 1–19 (MDKMLLLLGVSILLSEVFA) is a signal peptide. In terms of domain architecture, Pentraxin (PTX) spans 24 to 223 (TGKVFVFPRE…YAVIRPRCVA (200 aa)). An N-linked (GlcNAc...) asparagine glycan is attached at asparagine 51. A disulfide bridge connects residues cysteine 55 and cysteine 114. Aspartate 77, asparagine 78, glutamate 155, glutamine 156, aspartate 157, and glutamine 167 together coordinate Ca(2+).

Belongs to the pentraxin family. As to quaternary structure, homopentamer. Pentraxin (or pentaxin) have a discoid arrangement of 5 non-covalently bound subunits. Ca(2+) is required as a cofactor.

It is found in the secreted. This is Female protein from Nothocricetulus migratorius (Gray dwarf hamster).